Reading from the N-terminus, the 54-residue chain is Large ribosomal subunit protein bL33A (54 aa).

It belongs to the bacterial ribosomal protein bL33 family.

The protein is Large ribosomal subunit protein bL33A of Mesoplasma florum (strain ATCC 33453 / NBRC 100688 / NCTC 11704 / L1) (Acholeplasma florum).